The primary structure comprises 515 residues: Carboxyl-terminal-processing peptidase 2, chloroplastic (515 aa).

One can recognise a PDZ domain in the interval 198 to 286 (FKSLRSGTQG…SAVELAIRSG (89 aa)). Catalysis depends on charge relay system residues S417 and K442.

The protein belongs to the peptidase S41A family.

The protein resides in the plastid. It localises to the chloroplast thylakoid lumen. The catalysed reaction is The enzyme shows specific recognition of a C-terminal tripeptide, Xaa-Yaa-Zaa, in which Xaa is preferably Ala or Leu, Yaa is preferably Ala or Tyr, and Zaa is preferably Ala, but then cleaves at a variable distance from the C-terminus. A typical cleavage is -Ala-Ala-|-Arg-Ala-Ala-Lys-Glu-Asn-Tyr-Ala-Leu-Ala-Ala.. Its function is as follows. Protease involved in the C-terminal processing of the chloroplastic D1 protein of photosystem II. This proteolytic processing is necessary to allow the light-driven assembly of the tetranuclear manganese cluster, which is responsible for photosynthetic water oxidation. The polypeptide is Carboxyl-terminal-processing peptidase 2, chloroplastic (CTPA2) (Arabidopsis thaliana (Mouse-ear cress)).